The primary structure comprises 358 residues: UDP-N-acetylglucosamine--N-acetylmuramyl-(pentapeptide) pyrophosphoryl-undecaprenol N-acetylglucosamine transferase (358 aa).

UDP-N-acetyl-alpha-D-glucosamine is bound by residues 10-12 (TGG), asparagine 124, arginine 165, serine 187, isoleucine 243, and glutamine 288.

This sequence belongs to the glycosyltransferase 28 family. MurG subfamily.

Its subcellular location is the cell inner membrane. It carries out the reaction di-trans,octa-cis-undecaprenyl diphospho-N-acetyl-alpha-D-muramoyl-L-alanyl-D-glutamyl-meso-2,6-diaminopimeloyl-D-alanyl-D-alanine + UDP-N-acetyl-alpha-D-glucosamine = di-trans,octa-cis-undecaprenyl diphospho-[N-acetyl-alpha-D-glucosaminyl-(1-&gt;4)]-N-acetyl-alpha-D-muramoyl-L-alanyl-D-glutamyl-meso-2,6-diaminopimeloyl-D-alanyl-D-alanine + UDP + H(+). It functions in the pathway cell wall biogenesis; peptidoglycan biosynthesis. In terms of biological role, cell wall formation. Catalyzes the transfer of a GlcNAc subunit on undecaprenyl-pyrophosphoryl-MurNAc-pentapeptide (lipid intermediate I) to form undecaprenyl-pyrophosphoryl-MurNAc-(pentapeptide)GlcNAc (lipid intermediate II). This Syntrophotalea carbinolica (strain DSM 2380 / NBRC 103641 / GraBd1) (Pelobacter carbinolicus) protein is UDP-N-acetylglucosamine--N-acetylmuramyl-(pentapeptide) pyrophosphoryl-undecaprenol N-acetylglucosamine transferase.